We begin with the raw amino-acid sequence, 90 residues long: Co-chaperonin GroES (90 aa).

Belongs to the GroES chaperonin family. As to quaternary structure, heptamer of 7 subunits arranged in a ring. Interacts with the chaperonin GroEL.

Its subcellular location is the cytoplasm. In terms of biological role, together with the chaperonin GroEL, plays an essential role in assisting protein folding. The GroEL-GroES system forms a nano-cage that allows encapsulation of the non-native substrate proteins and provides a physical environment optimized to promote and accelerate protein folding. GroES binds to the apical surface of the GroEL ring, thereby capping the opening of the GroEL channel. The polypeptide is Co-chaperonin GroES (Bacteroides fragilis (strain ATCC 25285 / DSM 2151 / CCUG 4856 / JCM 11019 / LMG 10263 / NCTC 9343 / Onslow / VPI 2553 / EN-2)).